Consider the following 449-residue polypeptide: SUPPRESSOR OF GAMMA RESPONSE 1 (449 aa).

The NAC domain maps to 58–211 (LPRGVKFDPS…DYVVSKIFYQ (154 aa)). The DNA-binding element occupies 167 to 217 (RGCKKIMVLYGGKAVKTNWVMHQYHLGIEEDEKEGDYVVSKIFYQQPQQLV). Basic and acidic residues predominate over residues 324–336 (DDKEEQEKDRDNE). Positions 324–348 (DDKEEQEKDRDNENQGEEDPTWFDS) are disordered.

Post-translationally, phosphorylated in a DNA stress-independent manner. Hyperphosphorylated on SQ motifs upon double-strand breaks, H(2)O(2) or zeocin treatments. Hyperphosphorylation is required for SOG1 function, and unlike constitutive phosphorylation, is ATM dependent. As to expression, expressed in shoot and root apical meristems, in lateral root primordia, in the vasculature of young leaves and in the root stele.

The protein resides in the nucleus. Transcription factor regulating the transcriptional activation response to gamma irradiation. Required for stem-cell death induced by UVB or by gamma irradiation. Not required for ATM activation, but participates in pathways governed by both ATM and ATR sensor kinases. Involved in DNA damage response (DDR) system that regulates cell cycle arrest. Functional homolog of animal p53. Regulates SMR5 and SMR7 transcription. Regulates DNA repair and cytokinin signaling separately and plays a key role in controlling lateral root formation under genotoxic stress. The polypeptide is SUPPRESSOR OF GAMMA RESPONSE 1 (Arabidopsis thaliana (Mouse-ear cress)).